We begin with the raw amino-acid sequence, 382 residues long: Lipid-A-disaccharide synthase (382 aa).

The protein belongs to the LpxB family.

The enzyme catalyses 2-N,3-O-bis[(3R)-3-hydroxytetradecanoyl]-alpha-D-glucosaminyl 1-phosphate + UDP-2-N,3-O-bis[(3R)-3-hydroxytetradecanoyl]-alpha-D-glucosamine = lipid A disaccharide (E. coli) + UDP + H(+). It carries out the reaction a lipid X + a UDP-2-N,3-O-bis[(3R)-3-hydroxyacyl]-alpha-D-glucosamine = a lipid A disaccharide + UDP + H(+). It participates in glycolipid biosynthesis; lipid IV(A) biosynthesis; lipid IV(A) from (3R)-3-hydroxytetradecanoyl-[acyl-carrier-protein] and UDP-N-acetyl-alpha-D-glucosamine: step 5/6. Its function is as follows. Condensation of UDP-2,3-diacylglucosamine and 2,3-diacylglucosamine-1-phosphate to form lipid A disaccharide, a precursor of lipid A, a phosphorylated glycolipid that anchors the lipopolysaccharide to the outer membrane of the cell. The polypeptide is Lipid-A-disaccharide synthase (Escherichia coli (strain 55989 / EAEC)).